A 325-amino-acid polypeptide reads, in one-letter code: H-2 class I histocompatibility antigen, Q10 alpha chain (325 aa).

A signal peptide spans 1 to 24 (MGAMAPRTLLLLLAAALAPTQTQA). The segment at 25–114 (GSHSMRYFET…LLGYYNQSES (90 aa)) is alpha-1. Topologically, residues 25–310 (GSHSMRYFET…PPSTDSIMSH (286 aa)) are extracellular. N110 is a glycosylation site (N-linked (GlcNAc...) asparagine). An alpha-2 region spans residues 115-206 (GSHTIQWMYG…ELGKETLLRT (92 aa)). 2 disulfide bridges follow: C125–C188 and C227–C283. Positions 207 to 298 (DPPKTHVTHH…GLPEPLTLRW (92 aa)) are alpha-3. Residues 209-297 (PKTHVTHHPG…EGLPEPLTLR (89 aa)) enclose the Ig-like C1-type domain. Residue N280 is glycosylated (N-linked (GlcNAc...) asparagine). The connecting peptide stretch occupies residues 299–310 (EPPPSTDSIMSH). A helical membrane pass occupies residues 311 to 324 (IADLLWPSLKLWWY).

It belongs to the MHC class I family. Heterodimer of an alpha chain and a beta chain (beta-2-microglobulin).

The protein resides in the membrane. Involved in the presentation of foreign antigens to the immune system. This Mus musculus (Mouse) protein is H-2 class I histocompatibility antigen, Q10 alpha chain (H2-Q10).